The primary structure comprises 47 residues: Conotoxin Bu10 (47 aa).

Positions 1–22 (DSRGTQLHRALRKATILSVSAR) are excised as a propeptide. 3 disulfide bridges follow: cysteine 23/cysteine 37, cysteine 30/cysteine 41, and cysteine 36/cysteine 46. A Cysteine amide modification is found at cysteine 46.

The protein belongs to the conotoxin O1 superfamily. In terms of tissue distribution, expressed by the venom duct.

The protein localises to the secreted. This Conus bullatus (Bubble cone) protein is Conotoxin Bu10.